The sequence spans 440 residues: D-serine dehydratase (440 aa).

Residue K116 is modified to N6-(pyridoxal phosphate)lysine.

It belongs to the serine/threonine dehydratase family. DsdA subfamily. In terms of assembly, monomer. Requires pyridoxal 5'-phosphate as cofactor.

The catalysed reaction is D-serine = pyruvate + NH4(+). In Salmonella typhi, this protein is D-serine dehydratase.